A 278-amino-acid chain; its full sequence is Putative peptidase Cgl1093 (278 aa).

Residues M1–A32 form the signal peptide. Positions L33–G236 constitute a Peptidase S1 domain. C59 and C75 are disulfide-bonded. Residues H74, D123, and S189 each act as charge relay system in the active site.

This sequence belongs to the peptidase S1 family.

The protein resides in the secreted. The sequence is that of Putative peptidase Cgl1093 from Corynebacterium glutamicum (strain ATCC 13032 / DSM 20300 / JCM 1318 / BCRC 11384 / CCUG 27702 / LMG 3730 / NBRC 12168 / NCIMB 10025 / NRRL B-2784 / 534).